Here is a 402-residue protein sequence, read N- to C-terminus: Beta-peptidyl aminopeptidase BapA (402 aa).

The N-terminal stretch at 1 to 29 (MTSTQRLWSGALPLLTALIVSIAATASLA) is a signal peptide. Ser-279 (nucleophile) is an active-site residue. Residues Ser-317 and Glu-319 each act as proton donor/acceptor in the active site.

It belongs to the peptidase S58 family. In terms of assembly, heterooctamer of 4 heterodimers ((alpha:beta)4); each heterodimer is composed of an alpha subunit and a beta subunit processed from the same precursor. Post-translationally, autoproteolytic processing to generate the alpha and beta subunit is required for self-activation and is proposed to use a similar mechanism as substrate cleavage.

The protein localises to the periplasm. The enzyme catalyses Cleaves N-terminal beta-homoamino acids from peptides composed of 2 to 6 amino acids.. Inhibited by AEBSF (4-(2-aminoethyl)benzenesulfonyl fluoride, Pefabloc SC), ampicillin and AMP(hyd) (ampillicin-derived penicilloic acid). Functionally, beta-aminopeptidase that can cleave synthetic beta-peptides which consist of backbone-elongated beta-amino acid residues that are not processed by common proteolytic enzymes. Can cleave the beta-peptides beta-homoVal-beta-homoAla-beta-homoLeu and beta-homoAla-beta-homoLeu. Requires a beta-amino acid at the N-terminus of peptide substrates and cleaves the peptide bond between the N-terminal beta-amino acid and the amino acid at the second position of tripeptidic substrates of the general structure H-betahXaa-Ile-betahTyr-OH according to the following preferences with regard to the side chain of the N-terminal beta-amino acid: aliphatic and aromatic &gt; OH-containing &gt; hydrogen, basic and polar. This chain is Beta-peptidyl aminopeptidase BapA, found in Sphingosinicella xenopeptidilytica.